The chain runs to 471 residues: Glutamate--tRNA ligase (471 aa).

The 'HIGH' region signature appears at 9-19 (PSPTGYLHVGG). Residues Cys98, Cys100, Cys125, and His127 each coordinate Zn(2+). The 'KMSKS' region motif lies at 237–241 (KLSKR). Lys240 is a binding site for ATP.

The protein belongs to the class-I aminoacyl-tRNA synthetase family. Glutamate--tRNA ligase type 1 subfamily. In terms of assembly, monomer. Zn(2+) serves as cofactor.

Its subcellular location is the cytoplasm. The enzyme catalyses tRNA(Glu) + L-glutamate + ATP = L-glutamyl-tRNA(Glu) + AMP + diphosphate. Functionally, catalyzes the attachment of glutamate to tRNA(Glu) in a two-step reaction: glutamate is first activated by ATP to form Glu-AMP and then transferred to the acceptor end of tRNA(Glu). In Salmonella enteritidis PT4 (strain P125109), this protein is Glutamate--tRNA ligase.